A 440-amino-acid chain; its full sequence is Streptokinase A (440 aa).

The first 26 residues, 1-26 (MKNYLSIGVIALLFALTFGTVKSVQA), serve as a signal peptide directing secretion.

This protein is not a protease, but it activates plasminogen by complexing with it. As a potential virulence factor, it is thought to prevent the formation of effective fibrin barriers around the site of infection, thereby contributing to the invasiveness of the cells. This Streptococcus pyogenes serotype M1 protein is Streptokinase A (ska).